The following is a 379-amino-acid chain: Homoserine O-succinyltransferase (379 aa).

An AB hydrolase-1 domain is found at 51–360 (NAVLICHALS…DSPYGHDAFL (310 aa)). Ser-157 serves as the catalytic Nucleophile. Arg-227 is a binding site for substrate. Catalysis depends on residues Asp-323 and His-356. Asp-357 serves as a coordination point for substrate.

It belongs to the AB hydrolase superfamily. MetX family. As to quaternary structure, homodimer.

The protein resides in the cytoplasm. It catalyses the reaction L-homoserine + succinyl-CoA = O-succinyl-L-homoserine + CoA. It functions in the pathway amino-acid biosynthesis; L-methionine biosynthesis via de novo pathway; O-succinyl-L-homoserine from L-homoserine: step 1/1. Transfers a succinyl group from succinyl-CoA to L-homoserine, forming succinyl-L-homoserine. This is Homoserine O-succinyltransferase from Pseudomonas putida (strain GB-1).